The following is a 248-amino-acid chain: Ribosomal RNA small subunit methyltransferase G (248 aa).

S-adenosyl-L-methionine-binding positions include Gly85, Phe90, 108 to 110 (DSS), 137 to 138 (AE), and Arg156.

The protein belongs to the methyltransferase superfamily. RNA methyltransferase RsmG family.

Its subcellular location is the cytoplasm. In terms of biological role, specifically methylates the N7 position of a guanine in 16S rRNA. The chain is Ribosomal RNA small subunit methyltransferase G from Prochlorococcus marinus (strain NATL1A).